The chain runs to 243 residues: Orotidine 5'-phosphate decarboxylase (243 aa).

Substrate contacts are provided by residues aspartate 19, lysine 41, 69-78, threonine 124, arginine 185, glutamine 194, glycine 214, and arginine 215; that span reads DLKFFDIPAT. The Proton donor role is filled by lysine 71.

It belongs to the OMP decarboxylase family. Type 1 subfamily. In terms of assembly, homodimer.

It carries out the reaction orotidine 5'-phosphate + H(+) = UMP + CO2. Its pathway is pyrimidine metabolism; UMP biosynthesis via de novo pathway; UMP from orotate: step 2/2. In terms of biological role, catalyzes the decarboxylation of orotidine 5'-monophosphate (OMP) to uridine 5'-monophosphate (UMP). In Xanthomonas oryzae pv. oryzae (strain MAFF 311018), this protein is Orotidine 5'-phosphate decarboxylase.